The chain runs to 109 residues: Putative pterin-4-alpha-carbinolamine dehydratase (109 aa).

The protein belongs to the pterin-4-alpha-carbinolamine dehydratase family.

It carries out the reaction (4aS,6R)-4a-hydroxy-L-erythro-5,6,7,8-tetrahydrobiopterin = (6R)-L-erythro-6,7-dihydrobiopterin + H2O. This is Putative pterin-4-alpha-carbinolamine dehydratase from Halorhodospira halophila (strain DSM 244 / SL1) (Ectothiorhodospira halophila (strain DSM 244 / SL1)).